The chain runs to 168 residues: Photosystem I assembly protein Ycf3 (168 aa).

TPR repeat units lie at residues 35–68 (AFTYYRDGMSAQSEGNYAEALQNYYEATRPEIDP), 72–105 (SYILYNIGLIHTSNGEHTKALEYYFRALERNPFL), and 120–153 (GEQAIRQGDSEIAETWSDQAAEYWKQAIALTPGN).

This sequence belongs to the Ycf3 family.

It is found in the plastid. The protein localises to the chloroplast thylakoid membrane. Its function is as follows. Essential for the assembly of the photosystem I (PSI) complex. May act as a chaperone-like factor to guide the assembly of the PSI subunits. The chain is Photosystem I assembly protein Ycf3 from Amborella trichopoda.